A 3010-amino-acid chain; its full sequence is MSTNPKPQRKTKRNTNRRPQDVKFPGGGQIVGGVYLLPRRGPRLGVRATRKTSERSQPRGRRQPIPKARQPEGRAWAQPGYPWPLYGNEGLGWAGWLLSPRGSRPSWGPTDPRRRSRNLGKVIDTLTCGFADLMGYIPLVGAPLGGAARALAHGVRVLEDGVNYATGNLPGCSFSIFLLALLSCLTIPASAYEVRNVSGVYHVTNDCSNASIVYEAADMIMHTPGCVPCVRENNSSRCWVALTPTLAARNASVPTTTIRRHVDLLVGAAALCSAMYVGDLCGSVFLVAQLFTFSPRRHETVQDCNCSIYPGHVTGHRMAWDMMMNWSPTAALVVSQLLRIPQAVVDMVAGAHWGVLAGLAYYSMVGNWAKVLIVMLLFAGVDGGTYVTGGTMAKNTLGITSLFSPGSSQKIQLVNTNGSWHINRTALNCNDSLNTGFLAALFYVHKFNSSGCPERMASCSPIDAFAQGWGPITYNESHSSDQRPYCWHYAPRPCGIVPAAQVCGPVYCFTPSPVVVGTTDRFGVPTYSWGENETDVLLLNNTRPPQGNWFGCTWMNSTGFTKTCGGPPCNIGGIGNKTLTCPTDCFRKHPEATYTKCGSGPWLTPRCLVHYPYRLWHYPCTVNFTIFKVRMYVGGVEHRLEAACNWTRGERCNLEDRDRSELSPLLLSTTEWQVLPCSFTTLPALSTGLIHLHQNVVDVQYLYGIGSAVVSFAIKWEYVLLLFLLLADARVCACLWMMLLIAQAEAALENLVVLNAASVAGAHGILSFLVFFCAAWYIKGRLVPGAAYALYGVWPLLLLLLALPPRAYAMDREMAASCGGAVFVGLILLTLSPHYKLFLARLIWWLQYFITRAEAHLQVWIPPLNVRGGRDAVILLTCAIHPELIFTITKILLAILGPLMVLQAGITKVPYFVRAHGLIRACMLVRKVAGGHYVQMALMKLAALTGTYVYDHLTPLRDWAHAGLRDLAVAVEPVVFSDMETKVITWGADTAACGDIILGLPVSARRGREIHLGPADSLEGQGWRLLAPITAYSQQTRGLLGCIITSLTGRDRNQVEGEVQVVSTATQSFLATCVNGVCWTVYHGAGSKTLAGPKGPITQMYTNVDQDLVGWQAPPGARSLTPCTCGSSDLYLVTRHADVIPVRRRGDSRGSLLSPRPVSYLKGSSGGPLLCPSGHAVGIFRAAVCTRGVAKAVDFVPVESMETTMRSPVFTDNSSPPAVPQTFQVAHLHAPTGSGKSTKVPAAYAAQGYKVLVLNPSVAATLGFGAYMSKAHGIDPNIRTGVRTITTGAPITYSTYGKFLADGGCSGGAYDIIICDECHSTDSTTILGIGTVLDQAETAGARLVVLATATPPGSVTVPHPNIEEVALSSTGEIPFYGKAIPIETIKGGRHLIFCHSKKKCDELAAKLSGLGLNAVAYYRGLDVSVIPTSGDVIVVATDALMTGFTGDFDSVIDCNTCVTQTVDFSLDPTFTIETTTVPQDAVSRSQRRGRTGRGRMGIYRFVTPGERPSGMFDSSVLCECYDAGCAWYELTPAETSVRLRAYLNTPGLPVCQDHLEFWESVFTGLTHIDAHFLSQTKQAGDNFPYLVAYQATVCARAQAPPPSWDQMWKCLIRLKPTLHGPTPLLYRLGAVQNEVTTTHPITKYIMACMSADLEVVTSTWVLVGGVLAALAAYCLTTGSVVIVGRIILSGKPAIIPDREVLYREFDEMEECASHLPYIEQGMQLAEQFKQKAIGLLQTATKQAEAAAPVVESKWRTLEAFWAKHMWNFISGIQYLAGLSTLPGNPAIASLMAFTASITSPLTTQHTLLFNILGGWVAAQLAPPSAASAFVGAGIAGAAVGSIGLGKVLVDILAGYGAGVAGALVAFKVMSGEMPSTEDLVNLLPAILSPGALVVGVVCAAILRRHVGPGEGAVQWMNRLIAFASRGNHVSPTHYVPESDAAARVTQILSSLTITQLLKRLHQWINEDCSTPCSGSWLRDVWDWICTVLTDFKTWLQSKLLPRLPGVPFFSCQRGYKGVWRGDGIMQTTCPCGAQITGHVKNGSMRIVGPRTCSNTWHGTFPINAYTTGPCTPSPAPNYSRALWRVAAEEYVEVTRVGDFHYVTGMTTDNVKCPCQVPAPEFFTEVDGVRLHRYAPACKPLLREEVTFLVGLNQYLVGSQLPCEPEPDVAVLTSMLTDPSHITAETAKRRLARGSPPSLASSSASQLSAPSLKATCTTRHDSPDADLIEANLLWRQEMGGNITRVESENKVVILDSFEPLQAEEDEREVSVPAEILRRSRKFPRAMPIWARPDYNPPLLESWKDPDYVPPVVHGCPLPPAKAPPIPPPRRKRTVVLSESTVSSALAELATKTFGSSESSAVDSGTATASPDQPSDDGDAGSDVESYSSMPPLEGEPGDPDLSDGSWSTVSEEASEDVVCCSMSYTWTGALITPCAAEETKLPINALSNSLLRHHNLVYATTSRSASLRQKKVTFDRLQVLDDHYRDVLKEMKAKASTVKAKLLSVEEACKLTPPHSARSKFGYGAKDVRNLSSKAVNHIRSVWKDLLEDTETPIDTTIMAKNEVFCVQPEKGGRKPARLIVFPDLGVRVCEKMALYDVVSTLPQAVMGSSYGFQYSPGQRVEFLVNAWKAKKCPMGFAYDTRCFDSTVTENDIRVEESIYQCCDLAPEARQAIRSLTERLYIGGPLTNSKGQNCGYRRCRASGVLTTSCGNTLTCYLKAAAACRAAKLQDCTMLVCGDDLVVICESAGTQEDEASLRAFTEAMTRYSAPPGDPPKPEYDLELITSCSSNVSVAHDASGKRVYYLTRDPTTPLARAAWETARHTPVNSWLGNIIMYAPTLWARMILMTHFFSILLAQEQLEKALDCQIYGACYSIEPLDLPQIIQRLHGLSAFSLHSYSPGEINRVASCLRKLGVPPLRVWRHRARSVRARLLSQGGRAATCGKYLFNWAVRTKLKLTPIPAASQLDLSSWFVAGYSGGDIYHSLSRARPRWFMWCLLLLSVGVGIYLLPNR.

At Ser-2 the chain carries N-acetylserine; by host. Positions 2–23 are interaction with STAT1; sequence STNPKPQRKTKRNTNRRPQDVK. The interval 2–58 is interaction with EIF2AK2/PKR; sequence STNPKPQRKTKRNTNRRPQDVKFPGGGQIVGGVYLLPRRGPRLGVRATRKTSERSQP. The segment at 2–59 is interaction with DDX3X; sequence STNPKPQRKTKRNTNRRPQDVKFPGGGQIVGGVYLLPRRGPRLGVRATRKTSERSQPR. The tract at residues 2 to 75 is disordered; sequence STNPKPQRKT…PKARQPEGRA (74 aa). Residues 2-168 lie on the Cytoplasmic side of the membrane; that stretch reads STNPKPQRKT…EDGVNYATGN (167 aa). 2 consecutive short sequence motifs (nuclear localization signal) follow at residues 5 to 13 and 38 to 43; these read PKPQRKTKR and PRRGPR. Positions 7-16 are enriched in basic residues; it reads PQRKTKRNTN. The span at 32–47 shows a compositional bias: low complexity; the sequence is GGVYLLPRRGPRLGVR. The residue at position 53 (Ser-53) is a Phosphoserine; by host. 2 consecutive short sequence motifs (nuclear localization signal) follow at residues 58–64 and 66–71; these read PRGRRQP and PKARQP. At Ser-99 the chain carries Phosphoserine; by host. Residues 112-152 are important for endoplasmic reticulum and mitochondrial localization; the sequence is PRRRSRNLGKVIDTLTCGFADLMGYIPLVGAPLGGAARALA. The residue at position 116 (Ser-116) is a Phosphoserine; by host PKA. The interval 122–173 is interaction with APOA2; that stretch reads VIDTLTCGFADLMGYIPLVGAPLGGAARALAHGVRVLEDGVNYATGNLPGCS. The important for lipid droplets localization stretch occupies residues 164 to 167; that stretch reads YATG. A helical transmembrane segment spans residues 169 to 189; sequence LPGCSFSIFLLALLSCLTIPA. The propeptide at 178-191 is ER anchor for the core protein, removed in mature form by host signal peptidase; that stretch reads LLALLSCLTIPASA. At 190–358 the chain is on the lumenal side; it reads SAYEVRNVSG…AGAHWGVLAG (169 aa). Asn-196, Asn-209, Asn-234, and Asn-250 each carry an N-linked (GlcNAc...) asparagine; by host glycan. An important for fusion region spans residues 265–296; the sequence is LVGAAALCSAMYVGDLCGSVFLVAQLFTFSPR. Asn-305 is a glycosylation site (N-linked (GlcNAc...) asparagine; by host). The chain crosses the membrane as a helical span at residues 359–379; the sequence is LAYYSMVGNWAKVLIVMLLFA. At 380 to 725 the chain is on the lumenal side; the sequence is GVDGGTYVTG…WEYVLLLFLL (346 aa). The segment at 385-411 is HVR1; it reads TYVTGGTMAKNTLGITSLFSPGSSQKI. An N-linked (GlcNAc...) asparagine; by host glycan is attached at Asn-417. N-linked (GlcNAc...) (high mannose) asparagine; by host glycosylation is found at Asn-423, Asn-430, and Asn-448. Disulfide bonds link Cys-429-Cys-552, Cys-452-Cys-459, Cys-486-Cys-494, and Cys-503-Cys-508. The segment at 474 to 482 is HVR2; the sequence is YNESHSSDQ. The tract at residues 480–493 is CD81-binding 1; sequence SDQRPYCWHYAPRP. Residue Asn-532 is glycosylated (N-linked (GlcNAc...) (high mannose) asparagine; by host). The interval 544-551 is CD81-binding 2; it reads PPQGNWFG. N-linked (GlcNAc...) (high mannose) asparagine; by host glycosylation occurs at Asn-556. A disulfide bridge links Cys-564 with Cys-569. N-linked (GlcNAc...) (high mannose) asparagine; by host glycosylation occurs at Asn-576. Intrachain disulfides connect Cys-581–Cys-585, Cys-597–Cys-620, and Cys-607–Cys-644. Residues Asn-623 and Asn-645 are each glycosylated (N-linked (GlcNAc...) (high mannose) asparagine; by host). A disulfide bond links Cys-652 and Cys-677. Residues 660 to 671 form an EIF2AK2/eIF2-alpha phosphorylation homology domain (PePHD) region; that stretch reads SELSPLLLSTTE. Residues 726–746 form a helical membrane-spanning segment; it reads LADARVCACLWMMLLIAQAEA. Topologically, residues 747 to 757 are lumenal; sequence ALENLVVLNAA. A helical membrane pass occupies residues 758–778; that stretch reads SVAGAHGILSFLVFFCAAWYI. Topologically, residues 779–781 are cytoplasmic; it reads KGR. The helical transmembrane segment at 782 to 803 threads the bilayer; sequence LVPGAAYALYGVWPLLLLLLAL. Over 804 to 813 the chain is Lumenal; that stretch reads PPRAYAMDRE. Residues 814 to 834 form a helical membrane-spanning segment; that stretch reads MAASCGGAVFVGLILLTLSPH. Topologically, residues 835 to 838 are cytoplasmic; it reads YKLF. Residues 839 to 859 form a helical membrane-spanning segment; sequence LARLIWWLQYFITRAEAHLQV. The Lumenal portion of the chain corresponds to 860-881; it reads WIPPLNVRGGRDAVILLTCAIH. The chain crosses the membrane as a helical span at residues 882-902; the sequence is PELIFTITKILLAILGPLMVL. In terms of domain architecture, Peptidase C18 spans 903–1026; it reads QAGITKVPYF…SLEGQGWRLL (124 aa). At 903 to 1657 the chain is on the cytoplasmic side; that stretch reads QAGITKVPYF…CMSADLEVVT (755 aa). The tract at residues 904 to 1206 is protease NS2-3; it reads AGITKVPYFV…PVESMETTMR (303 aa). Cys-922 carries S-palmitoyl cysteine; by host lipidation. The interaction with host SCPS1 stretch occupies residues 929–949; sequence AGGHYVQMALMKLAALTGTYV. Residues His-952, Glu-972, and Cys-993 each act as for protease NS2 activity; shared with dimeric partner in the active site. The Peptidase S29 domain occupies 1027–1208; that stretch reads APITAYSQQT…ESMETTMRSP (182 aa). Catalysis depends on charge relay system; for serine protease NS3 activity residues His-1083 and Asp-1107. Residues Cys-1123 and Cys-1125 each coordinate Zn(2+). Ser-1165 acts as the Charge relay system; for serine protease NS3 activity in catalysis. 2 residues coordinate Zn(2+): Cys-1171 and His-1175. One can recognise a Helicase ATP-binding domain in the interval 1217–1369; it reads PAVPQTFQVA…PNIEEVALSS (153 aa). 1230 to 1237 provides a ligand contact to ATP; it reads APTGSGKS. Mg(2+) is bound by residues Ser-1237 and Glu-1317. Residues 1316–1319 carry the DECH box motif; sequence DECH. The tract at residues 1486-1497 is RNA-binding; sequence QRRGRTGRGRMG. The helical transmembrane segment at 1658 to 1678 threads the bilayer; that stretch reads STWVLVGGVLAALAAYCLTTG. The interval 1679–1690 is NS3-binding; sequence SVVIVGRIILSG. The Cytoplasmic portion of the chain corresponds to 1679–1805; the sequence is SVVIVGRIIL…SITSPLTTQH (127 aa). A helical membrane pass occupies residues 1806-1826; the sequence is TLLFNILGGWVAAQLAPPSAA. The Lumenal segment spans residues 1827-1828; the sequence is SA. Residues 1829 to 1849 traverse the membrane as a helical segment; that stretch reads FVGAGIAGAAVGSIGLGKVLV. The glycine zipper stretch occupies residues 1833–1861; the sequence is GIAGAAVGSIGLGKVLVDILAGYGAGVAG. A topological domain (cytoplasmic) is located at residue Asp-1850. A helical membrane pass occupies residues 1851-1871; it reads ILAGYGAGVAGALVAFKVMSG. At 1872–1881 the chain is on the lumenal side; sequence EMPSTEDLVN. The helical transmembrane segment at 1882-1902 threads the bilayer; the sequence is LLPAILSPGALVVGVVCAAIL. Over 1903 to 1972 the chain is Cytoplasmic; sequence RRHVGPGEGA…WINEDCSTPC (70 aa). Residues Cys-1968 and Cys-1972 are each lipidated (S-palmitoyl cysteine; by host). An intramembrane segment occupies 1973 to 2003; sequence SGSWLRDVWDWICTVLTDFKTWLQSKLLPRL. A membrane-binding region spans residues 1978–1998; it reads RDVWDWICTVLTDFKTWLQSK. Residues 2004–2989 are Cytoplasmic-facing; that stretch reads PGVPFFSCQR…YHSLSRARPR (986 aa). An RNA-binding region spans residues 2005-2221; the sequence is GVPFFSCQRG…KATCTTRHDS (217 aa). 4 residues coordinate Zn(2+): Cys-2011, Cys-2029, Cys-2031, and Cys-2052. The interval 2120–2208 is FKBP8-binding; sequence EFFTEVDGVR…ASSSASQLSA (89 aa). The transcriptional activation stretch occupies residues 2120-2332; it reads EFFTEVDGVR…PIPPPRRKRT (213 aa). Residues 2135–2139 are interaction with non-structural protein 4A; that stretch reads PACKP. The tract at residues 2187–2219 is disordered; sequence KRRLARGSPPSLASSSASQLSAPSLKATCTTRH. The segment at 2189 to 2441 is interaction with host SKP2; that stretch reads RLARGSPPSL…PCAAEETKLP (253 aa). Residue Ser-2194 is modified to Phosphoserine; by host; in p56. The span at 2194–2211 shows a compositional bias: low complexity; sequence SPPSLASSSASQLSAPSL. The residue at position 2197 (Ser-2197) is a Phosphoserine; by host; in p58. Ser-2201 bears the Phosphoserine; by host; in p56 and p58, regulates intracellular NS5A distribution mark. A phosphoserine; by host; in p58 mark is found at Ser-2204, Ser-2207, and Ser-2210. ISDR regions lie at residues 2206–2245 and 2210–2249; these read LSAP…TRVE and SLKA…SENK. The EIF2AK2/PKR-binding stretch occupies residues 2210–2275; that stretch reads SLKATCTTRH…REVSVPAEIL (66 aa). Residues 2249–2306 form an NS4B-binding region; that stretch reads KVVILDSFEPLQAEEDEREVSVPAEILRRSRKFPRAMPIWARPDYNPPLLESWKDPDY. An SH3-binding motif is present at residues 2322 to 2325; the sequence is PPIP. Residues 2326–2334 carry the Nuclear localization signal motif; it reads PPRRKRTVV. The interaction with host IFI27 stretch occupies residues 2332–2441; it reads TVVLSESTVS…PCAAEETKLP (110 aa). Lys-2350 participates in a covalent cross-link: Glycyl lysine isopeptide (Lys-Gly) (interchain with G-Cter in ubiquitin). Polar residues predominate over residues 2351-2371; that stretch reads TFGSSESSAVDSGTATASPDQ. The disordered stretch occupies residues 2351–2407; sequence TFGSSESSAVDSGTATASPDQPSDDGDAGSDVESYSSMPPLEGEPGDPDLSDGSWST. The V3 stretch occupies residues 2354-2377; that stretch reads SSESSAVDSGTATASPDQPSDDGD. Residues Ser-2448 and Ser-2461 each carry the phosphoserine; by host modification. Residues 2633–2751 form the RdRp catalytic domain; it reads PMGFAYDTRC…ICESAGTQED (119 aa). 3 residues coordinate Mg(2+): Asp-2639, Asp-2737, and Asp-2738. The helical transmembrane segment at 2990–3010 threads the bilayer; that stretch reads WFMWCLLLLSVGVGIYLLPNR.

The protein belongs to the hepacivirus polyprotein family. Homooligomer. Interacts with E1 (via C-terminus). Interacts with the non-structural protein 5A. Interacts (via N-terminus) with host STAT1 (via SH2 domain); this interaction results in decreased STAT1 phosphorylation and ubiquitin-mediated proteasome-dependent STAT1 degradation, leading to decreased IFN-stimulated gene transcription. Interacts with host STAT3; this interaction constitutively activates STAT3. Interacts with host LTBR receptor. Interacts with host TNFRSF1A receptor and possibly induces apoptosis. Interacts with host HNRPK. Interacts with host YWHAE. Interacts with host UBE3A/E6AP. Interacts with host DDX3X. Interacts with host APOA2. Interacts with host RXRA protein. Interacts with host SP110 isoform 3/Sp110b; this interaction sequesters the transcriptional corepressor SP110 away from the nucleus. Interacts with host CREB3 nuclear transcription protein; this interaction triggers cell transformation. Interacts with host ACY3. Interacts with host C1QR1. Interacts with host RBM24; this interaction, which enhances the interaction of the mature core protein with 5'-UTR, may inhibit viral translation and favor replication. Interacts with host EIF2AK2/PKR; this interaction induces the autophosphorylation of EIF2AK2. Part of the viral assembly initiation complex composed of NS2, E1, E2, NS3, NS4A, NS5A and the mature core protein. As to quaternary structure, forms a heterodimer with envelope glycoprotein E2. Interacts with mature core protein. Interacts with protease NS2. The heterodimer E1/E2 interacts with host CLDN1; this interaction plays a role in viral entry into host cell. Interacts with host SPSB2 (via C-terminus). Part of the viral assembly initiation complex composed of NS2, E1, E2, NS3, NS4A, NS5A and the mature core protein. Interacts with human PLSCR1. Interacts with host NEURL3; this interaction prevents E1 binding to glycoprotein E2. In terms of assembly, forms a heterodimer with envelope glycoprotein E1. Interacts with host CD81 and SCARB1 receptors; these interactions play a role in viral entry into host cell. Interacts with host EIF2AK2/PKR; this interaction inhibits EIF2AK2 and probably allows the virus to evade the innate immune response. Interacts with host CD209/DC-SIGN and CLEC4M/DC-SIGNR. Interact with host SPCS1; this interaction is essential for viral particle assembly. Interacts with protease NS2. The heterodimer E1/E2 interacts with host CLDN1; this interaction plays a role in viral entry into host cell. Part of the viral assembly initiation complex composed of NS2, E1, E2, NS3, NS4A, NS5A and the mature core protein. Interacts with host SLC3A2/4F2hc; the interaction may facilitate viral entry into host cell. Interacts with human PLSCR1. Homohexamer. Homoheptamer. Interacts with protease NS2. As to quaternary structure, homodimer. Interacts with host SPCS1; this interaction is essential for viral particle assembly. Interacts with envelope glycoprotein E1. Interacts with envelope glycoprotein E2. Interacts with viroporin p7. Interacts with serine protease/helicase NS3. Part of the replication complex composed of NS2, NS3, NS4A, NS4B, NS5A and the RNA-directed RNA polymerase embedded in an ER-derived membranous web. Part of the viral assembly initiation complex composed of NS2, E1, E2, NS3, NS4A, NS5A and the mature core protein. In terms of assembly, interacts with protease NS2. Interacts with non-structural protein 4A; this interaction stabilizes the folding of NS3 serine protease. NS3-NS4A interaction is essential for NS3 activation and allows membrane anchorage of the latter. NS3/NS4A complex also prevents phosphorylation of host IRF3, thus preventing the establishment of dsRNA induced antiviral state. Interacts with host MAVS; this interaction leads to the cleavage and inhibition of host MAVS. Interacts with host TICAM1; this interaction leads to the cleavage and inhibition of host TICAM1. Interacts with host TANK-binding kinase/TBK1; this interaction results in the inhibition of the association between TBK1 and IRF3, which leads to the inhibition of IRF3 activation. Interacts with host RBM24. Part of the replication complex composed of NS2, NS3, NS4A, NS4B, NS5A and the RNA-directed RNA polymerase embedded in an ER-derived membranous web. Part of the viral assembly initiation complex composed of NS2, E1, E2, NS3, NS4A, NS5A and the mature core protein. Monomer. Homodimer; dimerization is required for RNA-binding. Interacts with the mature core protein. Interacts with host GRB2. Interacts with host BIN1. Interacts with host PIK3R1. Interacts with host SRCAP. Interacts with host FKBP8. Interacts with host VAPB. Interacts with host EIF2AK2/PKR; this interaction leads to disruption of EIF2AK2 dimerization by NS5A and probably allows the virus to evade the innate immune response. Interacts (via N-terminus) with host PACSIN2 (via N-terminus); this interaction attenuates protein kinase C alpha-mediated phosphorylation of PACSIN2 by disrupting the interaction between PACSIN2 and PRKCA. Interacts (via N-terminus) with host SRC kinase (via SH2 domain). Interacts with most Src-family kinases. Interacts with host IFI27 and SKP2; promotes the ubiquitin-mediated proteasomal degradation of NS5A. Interacts (via N-terminus) with non-structural protein 4A. Interacts with non-structural protein 4B. Interacts with RNA-directed RNA polymerase. Part of the replication complex composed of NS2, NS3, NS4A, NS4B, NS5A and the RNA-directed RNA polymerase embedded in an ER-derived membranous web. Interacts with host GPS2. Interacts with host TNFRSF21; this interaction allows the modulation by the virus of JNK, p38 MAPK, STAT3, and Akt signaling pathways in a DR6-dependent manner. Interacts (via N-terminus) with host CIDEB (via N-terminus); this interaction seems to regulate the association of HCV particles with APOE. Interacts with host CHKA/Choline Kinase-alpha; CHKA bridges host PI4KA and NS5A and potentiates NS5A-stimulated PI4KA activity, which then facilitates the targeting of the ternary complex to the ER for viral replication. Interacts with host SPSB2 (via C-terminus); this interaction targets NS5A for ubiquitination and degradation. Part of the viral assembly initiation complex composed of NS2, E1, E2, NS3, NS4A, NS5A and the mature core protein. Requires Zn(2+) as cofactor. Mg(2+) is required as a cofactor. Post-translationally, specific enzymatic cleavages in vivo yield mature proteins. The structural proteins, core, E1, E2 and p7 are produced by proteolytic processing by host signal peptidases. The core protein precursor is synthesized as a 23 kDa, which is retained in the ER membrane through the hydrophobic signal peptide. Cleavage by the signal peptidase releases the 21 kDa mature core protein. The cleavage of the core protein precursor occurs between aminoacids 176 and 188 but the exact cleavage site is not known. Some degraded forms of the core protein appear as well during the course of infection. The other proteins (p7, NS2, NS3, NS4A, NS4B, NS5A and NS5B) are cleaved by the viral proteases. Autoprocessing between NS2 and NS3 is mediated by the NS2 cysteine protease catalytic domain and regulated by the NS3 N-terminal domain. Phosphorylated by host PKC and PKA. In terms of processing, ubiquitinated; mediated by UBE3A and leading to core protein subsequent proteasomal degradation. Post-translationally, highly N-glycosylated. Palmitoylation is required for NS2/3 autoprocessing and E2 recruitment to membranes. In terms of processing, palmitoylated. This modification may play a role in its polymerization or in protein-protein interactions. Post-translationally, cleaved by host caspases which are probably activated by the viral infection. Ubiquitinated. Ubiquitination, most probably at Lys-2350, mediated by host IFI27 and SKP2 leads to proteasomal degradation, restricting viral infection. Ubiquitination by host TRIM22 leads to interruption of viral replication. In terms of processing, phosphorylated on serines in a basal form termed p56. p58 is a hyperphosphorylated form of p56. p56 and p58 coexist in the cell in roughly equivalent amounts. Hyperphosphorylation is dependent on the presence of NS4A. Host CSNK1A1/CKI-alpha or RPS6KB1 kinases may be responsible for NS5A phosphorylation. Post-translationally, tyrosine phosphorylation is essential for the interaction with host SRC. The N-terminus is phosphorylated by host PRK2/PKN2.

The protein localises to the host endoplasmic reticulum membrane. The protein resides in the host mitochondrion membrane. It is found in the virion. It localises to the host cytoplasm. Its subcellular location is the host nucleus. The protein localises to the host lipid droplet. The protein resides in the virion membrane. It is found in the host mitochondrion. It localises to the host cell membrane. Its subcellular location is the host perinuclear region. The enzyme catalyses Hydrolysis of four peptide bonds in the viral precursor polyprotein, commonly with Asp or Glu in the P6 position, Cys or Thr in P1 and Ser or Ala in P1'.. It catalyses the reaction a ribonucleoside 5'-triphosphate + H2O = a ribonucleoside 5'-diphosphate + phosphate + H(+). The catalysed reaction is ATP + H2O = ADP + phosphate + H(+). It carries out the reaction RNA(n) + a ribonucleoside 5'-triphosphate = RNA(n+1) + diphosphate. With respect to regulation, inhibited by the antiviral drug hexamethylene amiloride. Inhibition by amantadine appears to be genotype-dependent. Also inhibited by long-alkyl-chain iminosugar derivatives. Its activity is regulated as follows. Activity is up-regulated by PRK2/PKN2-mediated phosphorylation. Functionally, packages viral RNA to form a viral nucleocapsid, and promotes virion budding. Participates in the viral particle production as a result of its interaction with the non-structural protein 5A. Binds RNA and may function as a RNA chaperone to induce the RNA structural rearrangements taking place during virus replication. Modulates viral translation initiation by interacting with viral IRES and 40S ribosomal subunit. Affects various cell signaling pathways, host immunity and lipid metabolism. Prevents the establishment of cellular antiviral state by blocking the interferon-alpha/beta (IFN-alpha/beta) and IFN-gamma signaling pathways and by blocking the formation of phosphorylated STAT1 and promoting ubiquitin-mediated proteasome-dependent degradation of STAT1. Activates STAT3 leading to cellular transformation. Regulates the activity of cellular genes, including c-myc and c-fos. May repress the promoter of p53, and sequester CREB3 and SP110 isoform 3/Sp110b in the cytoplasm. Represses cell cycle negative regulating factor CDKN1A, thereby interrupting an important check point of normal cell cycle regulation. Targets transcription factors involved in the regulation of inflammatory responses and in the immune response: suppresses NF-kappa-B activation, and activates AP-1. Binds to dendritic cells (DCs) via C1QR1, resulting in down-regulation of T-lymphocytes proliferation. Alters lipid metabolism by interacting with hepatocellular proteins involved in lipid accumulation and storage. Induces up-regulation of FAS promoter activity, and thereby contributes to the increased triglyceride accumulation in hepatocytes (steatosis). Forms a heterodimer with envelope glycoprotein E2, which mediates virus attachment to the host cell, virion internalization through clathrin-dependent endocytosis and fusion with host membrane. Fusion with the host cell is most likely mediated by both E1 and E2, through conformational rearrangements of the heterodimer required for fusion rather than a classical class II fusion mechanism. E1/E2 heterodimer binds host apolipoproteins such as APOB and APOE thereby forming a lipo-viro-particle (LVP). APOE associated to the LVP allows the initial virus attachment to cell surface receptors such as the heparan sulfate proteoglycans (HSPGs), syndecan-1 (SDC1), syndecan-1 (SDC2), the low-density lipoprotein receptor (LDLR) and scavenger receptor class B type I (SCARB1). The cholesterol transfer activity of SCARB1 allows E2 exposure and binding of E2 to SCARB1 and the tetraspanin CD81. E1/E2 heterodimer binding on CD81 activates the epithelial growth factor receptor (EGFR) signaling pathway. Diffusion of the complex E1-E2-EGFR-SCARB1-CD81 to the cell lateral membrane allows further interaction with Claudin 1 (CLDN1) and occludin (OCLN) to finally trigger HCV entry. Its function is as follows. Forms a heterodimer with envelope glycoprotein E1, which mediates virus attachment to the host cell, virion internalization through clathrin-dependent endocytosis and fusion with host membrane. Fusion with the host cell is most likely mediated by both E1 and E2, through conformational rearrangements of the heterodimer required for fusion rather than a classical class II fusion mechanism. The interaction between envelope glycoprotein E2 and host apolipoprotein E/APOE allows the proper assembly, maturation and infectivity of the viral particles. This interaction is probably promoted via the up-regulation of cellular autophagy by the virus. E1/E2 heterodimer binds host apolipoproteins such as APOB and APOE thereby forming a lipo-viro-particle (LVP). APOE associated to the LVP allows the initial virus attachment to cell surface receptors such as the heparan sulfate proteoglycans (HSPGs), syndecan-1 (SDC1), syndecan-1 (SDC2), the low-density lipoprotein receptor (LDLR) and scavenger receptor class B type I (SCARB1). The cholesterol transfer activity of SCARB1 allows E2 exposure and binding of E2 to SCARB1 and the tetraspanin CD81. E1/E2 heterodimer binding on CD81 activates the epithelial growth factor receptor (EGFR) signaling pathway. Diffusion of the complex E1-E2-EGFR-SCARB1-CD81 to the cell lateral membrane allows further interaction with Claudin 1 (CLDN1) and occludin (OCLN) to finally trigger HCV entry. Inhibits host EIF2AK2/PKR activation, preventing the establishment of an antiviral state. Viral ligand for CD209/DC-SIGN and CLEC4M/DC-SIGNR, which are respectively found on dendritic cells (DCs), and on liver sinusoidal endothelial cells and macrophage-like cells of lymph node sinuses. These interactions allow the capture of circulating HCV particles by these cells and subsequent facilitated transmission to permissive cells such as hepatocytes and lymphocyte subpopulations. The interaction between E2 and host amino acid transporter complex formed by SLC3A2 and SLC7A5/LAT1 may facilitate viral entry into host cell. In terms of biological role, ion channel protein that acts as a viroporin and plays an essential role in the assembly, envelopment and secretion of viral particles. Regulates the host cell secretory pathway, which induces the intracellular retention of viral glycoproteins and favors assembly of viral particles. Creates a pore in acidic organelles and releases Ca(2+) and H(+) in the cytoplasm of infected cells, leading to a productive viral infection. High levels of cytoplasmic Ca(2+) may trigger membrane trafficking and transport of viral ER-associated proteins to viroplasms, sites of viral genome replication. This ionic imbalance induces the assembly of the inflammasome complex, which triggers the maturation of pro-IL-1beta into IL-1beta through the action of caspase-1. Targets also host mitochondria and induces mitochondrial depolarization. In addition of its role as a viroporin, acts as a lipid raft adhesion factor. Functionally, cysteine protease required for the proteolytic auto-cleavage between the non-structural proteins NS2 and NS3. The N-terminus of NS3 is required for the function of NS2 protease (active region NS2-3). Promotes the initiation of viral particle assembly by mediating the interaction between structural and non-structural proteins. Displays three enzymatic activities: serine protease with a chymotrypsin-like fold, NTPase and RNA helicase. NS3 serine protease, in association with NS4A, is responsible for the cleavages of NS3-NS4A, NS4A-NS4B, NS4B-NS5A and NS5A-NS5B. The NS3/NS4A complex prevents phosphorylation of host IRF3, thus preventing the establishment of dsRNA induced antiviral state. The NS3/NS4A complex induces host amino acid transporter component SLC3A2, thus contributing to HCV propagation. NS3 RNA helicase binds to RNA and unwinds both dsDNA and dsRNA in the 3' to 5' direction, and likely resolves RNA complicated stable secondary structures in the template strand. Binds a single ATP and catalyzes the unzipping of a single base pair of dsRNA. Inhibits host antiviral proteins TBK1 and IRF3 thereby preventing the establishment of an antiviral state. Cleaves host MAVS/CARDIF thereby preventing the establishment of an antiviral state. Cleaves host TICAM1/TRIF, thereby disrupting TLR3 signaling and preventing the establishment of an antiviral state. Its function is as follows. Peptide cofactor which forms a non-covalent complex with the N-terminal of NS3 serine protease. The NS3/NS4A complex prevents phosphorylation of host IRF3, thus preventing the establishment of dsRNA induced antiviral state. The NS3/NS4A complex induces host amino acid transporter component SLC3A2, thus contributing to HCV propagation. In terms of biological role, induces a specific membrane alteration that serves as a scaffold for the virus replication complex. This membrane alteration gives rise to the so-called ER-derived membranous web that contains the replication complex. NS4B self-interaction contributes to its function in membranous web formation. Promotes host TRIF protein degradation in a CASP8-dependent manner thereby inhibiting host TLR3-mediated interferon signaling. Disrupts the interaction between STING and TBK1 contributing to the inhibition of interferon signaling. Functionally, phosphorylated protein that is indispensable for viral replication and assembly. Both hypo- and hyperphosphorylated states are required for the viral life cycle. The hyperphosphorylated form of NS5A is an inhibitor of viral replication. Involved in RNA-binding and especially in binding to the viral genome. Zinc is essential for RNA-binding. Participates in the viral particle production as a result of its interaction with the viral mature core protein. Its interaction with host VAPB may target the viral replication complex to vesicles. Down-regulates viral IRES translation initiation. Mediates interferon resistance, presumably by interacting with and inhibiting host EIF2AK2/PKR. Prevents BIN1-induced apoptosis. Acts as a transcriptional activator of some host genes important for viral replication when localized in the nucleus. Via the interaction with host PACSIN2, modulates lipid droplet formation in order to promote virion assembly. Modulates TNFRSF21/DR6 signaling pathway for viral propagation. RNA-dependent RNA polymerase that performs primer-template recognition and RNA synthesis during viral replication. Initiates RNA transcription/replication at a flavin adenine dinucleotide (FAD), resulting in a 5'- FAD cap on viral RNAs. In this way, recognition of viral 5' RNA by host pattern recognition receptors can be bypassed, thereby evading activation of antiviral pathways. In Hepatitis C virus genotype 1b (isolate Con1) (HCV), this protein is Genome polyprotein.